We begin with the raw amino-acid sequence, 526 residues long: Amino acid transporter AVT1E (526 aa).

The segment at 1–49 (MKQNETFDQEREDLYHTFDEEDEESQTESSVPSTPLSRNRSEDVPVPWP) is disordered. Basic and acidic residues predominate over residues 8–18 (DQEREDLYHTF). Helical transmembrane passes span 140-160 (SVLNGINVLCGVALLTMPYAV), 165-185 (WLGLFILFSFGIITFYTGILL), 212-232 (ILVSILLYVELYASCVEYIIM), 253-273 (LDSTQVFAITTTLIVLPTVWL), 278-298 (LLSYLSAGGVISSILLALCLF), 320-340 (IPVAIGIYGFGFGSHSVFPNI), 353-373 (VLLISFAFCTLFYIAVAVCGF), 397-417 (IAVWTAVVTPMTKYALTITPV), 436-456 (GVSMLFRTILVLSTLVVALTV), 458-478 (FFATVAALIGSFIAMLIALIF), and 494-514 (FQIGICILIVIIGIVSGCCGT).

The protein belongs to the amino acid/polyamine transporter 2 family. Amino acid/auxin permease (AAAP) (TC 2.A.18.5) subfamily.

The protein localises to the membrane. This chain is Amino acid transporter AVT1E, found in Arabidopsis thaliana (Mouse-ear cress).